Consider the following 417-residue polypeptide: MSLSNKLTLDKLDVKGKRVVMRVDFNVPMKNNQITNNQRIKAAVPSIKFCLDNGAKSVVLMSHLGRPDGVPMPDKYSLEPVAVELKSLLGKDVLFLKDCVGPEVEKACANPAAGSVILLENLRFHVEEEGKGKDASGNKVKAEPAKIEAFRASLSKLGDVYVNDAFGTAHRAHSSMVGVNLPQKAGGFLMKKELNYFAKALESPERPFLAILGGAKVADKIQLINNMLDKVNEMIIGGGMAFTFLKVLNNMEIGTSLFDEEGAKIVKDLMSKAEKNGVKITLPVDFVTADKFDENAKTGQATVASGIPAGWMGLDCGPESSKKYAEAVTRAKQIVWNGPVGVFEWEAFAQGTKALMDEVVKATSRGCITIIGGGDTATCCAKWNTEDKVSHVSTGGGASLELLEGKVLPGVDALSNI.

Position 2 is an N-acetylserine (Ser-2). A phosphoserine mark is found at Ser-2 and Ser-4. Lys-6 is subject to N6-succinyllysine. N6-acetyllysine is present on Lys-11. (2R)-3-phosphoglycerate is bound by residues Val-23, Asp-24, Phe-25, Asn-26, Gln-38, and Arg-39. Positions 38 to 43 (QRIKAA) are mitochondrial targeting region exposed following cis-trans isomerization by PIN1 and recognized by the TOM complex for mitochondrial translocation of the protein. Position 48 is an N6-acetyllysine; alternate (Lys-48). An N6-succinyllysine; alternate modification is found at Lys-48. (2R)-3-phosphoglycerate contacts are provided by Ser-62, His-63, Gly-65, and Arg-66. Lys-75 carries the N6-acetyllysine modification. Tyr-76 bears the Phosphotyrosine mark. Lys-86 and Lys-91 each carry N6-acetyllysine. Lys-97 bears the N6-acetyllysine; alternate mark. Lys-97 is modified (N6-(2-hydroxyisobutyryl)lysine; alternate). (2R)-3-phosphoglycerate contacts are provided by Leu-122 and Arg-123. Lys-131 is modified (N6-acetyllysine; alternate). Lys-131 carries the post-translational modification N6-malonyllysine; alternate. An N6-acetyllysine modification is found at Lys-146. Residues His-170 and Arg-171 each coordinate (2R)-3-phosphoglycerate. Residue Lys-191 is modified to N6-succinyllysine. Tyr-196 is modified (phosphotyrosine). Lys-199 bears the N6-acetyllysine mark. Position 203 is a phosphoserine (Ser-203). Gly-214 contacts ADP. Position 214 (Gly-214) interacts with CDP. AMP is bound by residues Ala-215 and Lys-216. ATP is bound at residue Ala-215. Ala-215 lines the Mg(2+) pocket. Lys-216 carries the post-translational modification N6-(2-hydroxyisobutyryl)lysine. Positions 218 and 219 each coordinate Mg(2+). Asp-219 is a binding site for CDP. An AMP-binding site is contributed by Lys-220. Residue Lys-220 participates in ATP binding. At Lys-220 the chain carries N6-(2-hydroxyisobutyryl)lysine. Gly-238 contributes to the ADP binding site. A CDP-binding site is contributed by Gly-238. Gly-239 is an AMP binding site. Gly-239 serves as a coordination point for ATP. N6-acetyllysine occurs at positions 267 and 291. An AMP-binding site is contributed by Gly-313. Residue Gly-313 participates in ATP binding. At Lys-323 the chain carries N6-(2-hydroxyisobutyryl)lysine. CDP contacts are provided by Gly-338, Val-340, and Phe-343. Position 343 (Phe-343) interacts with ADP. Glu-344 provides a ligand contact to AMP. Glu-344 lines the ATP pocket. Lys-361 carries the post-translational modification N6-acetyllysine. The ATP site is built by Asp-375 and Thr-376. Asp-375 contacts Mg(2+).

The protein belongs to the phosphoglycerate kinase family. Monomer. Interacts with kinase MAPK1/ERK2; the interaction is direct, occurs under hypoxic conditions, and promotes its interaction with PIN1. Interacts with peptidyl-prolyl cis-trans isomerase PIN1; the interaction is direct, occurs under hypoxic conditions, and targets the protein to the mitochondrion by promoting interactions with the TOM complex. Interacts with mitochondrial circRNA mcPGK1 (via its 2nd stem-loop); the interaction is direct and targets the protein to the mitochondrion by promoting interactions with the TOM complex. Interacts with pyruvate dehydrogenase kinase PDK1; the interaction is direct, occurs under hypoxic conditions and leads to PDK1-mediated inhibition of pyruvate dehydrogenase complex activity. Mg(2+) serves as cofactor. In terms of processing, phosphorylated at Ser-203 by MAPK1/ERK2 under hypoxic conditions, which promotes its mitochondrial targeting.

Its subcellular location is the cytoplasm. It localises to the cytosol. The protein localises to the mitochondrion matrix. It catalyses the reaction (2R)-3-phosphoglycerate + ATP = (2R)-3-phospho-glyceroyl phosphate + ADP. The catalysed reaction is L-seryl-[protein] + ATP = O-phospho-L-seryl-[protein] + ADP + H(+). It participates in carbohydrate degradation; glycolysis; pyruvate from D-glyceraldehyde 3-phosphate: step 2/5. Catalyzes one of the two ATP producing reactions in the glycolytic pathway via the reversible conversion of 1,3-diphosphoglycerate to 3-phosphoglycerate. Both L- and D- forms of purine and pyrimidine nucleotides can be used as substrates, but the activity is much lower on pyrimidines. In addition to its role as a glycolytic enzyme, it seems that PGK-1 acts as a polymerase alpha cofactor protein (primer recognition protein). Acts as a protein kinase when localized to the mitochondrion where it phosphorylates pyruvate dehydrogenase kinase PDK1 to inhibit pyruvate dehydrogenase complex activity and suppress the formation of acetyl-coenzyme A from pyruvate, and consequently inhibit oxidative phosphorylation and promote glycolysis. May play a role in sperm motility. In Macaca fascicularis (Crab-eating macaque), this protein is Phosphoglycerate kinase 1 (PGK1).